Reading from the N-terminus, the 487-residue chain is MTELFIDGAWIAGSGPAFASRNPGTDAIAWQGDSASAADVDRAVASARRAFAGWSALDFEARCEIVKRFAALLTERKEAIATAIGRETGKPLWEARTEVAAMAAKVGISIQAYQERTGEKRQDMADGVAVLRHRPHGVVAVFGPYNFPGHLPNGHIVPALIAGNTVVFKPSELAPGVARATVEVWQEAGLPAGVLNLVQGEKDTGIALANHRQIDGLFFTGSSDTGTLLHRQFGGRPEIVLALEMGGNNPLVIGEVEDLDAAVHHTIQSAFLSAGQRCTCARRIFVPQGAFGERFLARLADVTSKITADVFDADPQPFMGAVISARAAAKLVDAQSRLIEQGAKPIIEMTQRDPRLGFVNASIIDVTGVANLPDEEHFGPLAQIVRYATFDEAIERANDTAFGLSAGLLADDAHAWEHFRRTIRAGIVNWNRPTNGASSAAPFGGTGRSGNHRPSAYYAADYCAYPMASVESTQLTLPASLSPGLHF.

NAD(+) is bound at residue 221–226; sequence GSSDTG. Catalysis depends on residues glutamate 244 and cysteine 278.

This sequence belongs to the aldehyde dehydrogenase family. AstD subfamily.

The catalysed reaction is N-succinyl-L-glutamate 5-semialdehyde + NAD(+) + H2O = N-succinyl-L-glutamate + NADH + 2 H(+). It functions in the pathway amino-acid degradation; L-arginine degradation via AST pathway; L-glutamate and succinate from L-arginine: step 4/5. Its function is as follows. Catalyzes the NAD-dependent reduction of succinylglutamate semialdehyde into succinylglutamate. This is N-succinylglutamate 5-semialdehyde dehydrogenase from Burkholderia ambifaria (strain ATCC BAA-244 / DSM 16087 / CCUG 44356 / LMG 19182 / AMMD) (Burkholderia cepacia (strain AMMD)).